The chain runs to 252 residues: Hydroxyacylglutathione hydrolase (252 aa).

Zn(2+) contacts are provided by His-54, His-56, Asp-58, His-59, His-113, Asp-132, and His-170.

It belongs to the metallo-beta-lactamase superfamily. Glyoxalase II family. As to quaternary structure, monomer. Requires Zn(2+) as cofactor.

It catalyses the reaction an S-(2-hydroxyacyl)glutathione + H2O = a 2-hydroxy carboxylate + glutathione + H(+). The protein operates within secondary metabolite metabolism; methylglyoxal degradation; (R)-lactate from methylglyoxal: step 2/2. In terms of biological role, thiolesterase that catalyzes the hydrolysis of S-D-lactoyl-glutathione to form glutathione and D-lactic acid. This is Hydroxyacylglutathione hydrolase from Synechococcus sp. (strain JA-3-3Ab) (Cyanobacteria bacterium Yellowstone A-Prime).